The chain runs to 143 residues: Hemoglobin cathodic subunit alpha (143 aa).

Residue Ser2 is modified to N-acetylserine. Positions 2–143 (SLTAKDKTLV…VSAALADKYR (142 aa)) constitute a Globin domain. His59 contacts O2. His89 lines the heme b pocket.

This sequence belongs to the globin family. As to quaternary structure, heterotetramer of two alpha chains and two beta chains. As to expression, red blood cells.

In terms of biological role, involved in oxygen transport from the gills to the various peripheral tissues. The chain is Hemoglobin cathodic subunit alpha from Conger conger (Conger eel).